The following is a 213-amino-acid chain: Histone H1.3 (213 aa).

N-acetylserine is present on Ser1. Residues 1–15 show a composition bias toward low complexity; that stretch reads SEAPAETAAPAPAEK. Positions 1–41 are disordered; the sequence is SEAPAETAAPAPAEKSPAKKKKAAKKPGAGAAKRKAAGPPV. N6-acetyllysine is present on Lys15. N6-(beta-hydroxybutyryl)lysine occurs at positions 35 and 53. The H15 domain maps to 37–110; the sequence is AGPPVSELIT…GASGSFKLDK (74 aa). The residue at position 55 (Arg55) is a Citrulline. An N6-(beta-hydroxybutyryl)lysine mark is found at Lys65, Lys86, and Lys91. Residues 92 to 213 are disordered; that stretch reads GTLVETKGTG…AKKTAAKKKK (122 aa). Ser105 carries the phosphoserine modification. Lys107 carries the post-translational modification N6-(beta-hydroxybutyryl)lysine. The span at 107–119 shows a compositional bias: basic and acidic residues; it reads KLDKKAASGEAKP. Basic residues-rich tracts occupy residues 120 to 131, 138 to 170, and 179 to 213; these read KPKKAGAAKPKK, KKPK…KVAK, and KSPK…KKKK.

Belongs to the histone H1/H5 family. In terms of processing, H1 histones are progressively phosphorylated during the cell cycle, becoming maximally phosphorylated during late G2 phase and M phase, and being dephosphorylated sharply thereafter. Post-translationally, citrullination at Arg-55 (H1R54ci) by PADI4 takes place within the DNA-binding site of H1 and results in its displacement from chromatin and global chromatin decondensation, thereby promoting pluripotency and stem cell maintenance.

The protein resides in the nucleus. It is found in the chromosome. Its function is as follows. Histones H1 are necessary for the condensation of nucleosome chains into higher-order structures. The protein is Histone H1.3 of Oryctolagus cuniculus (Rabbit).